The primary structure comprises 144 residues: HMG1/2-like protein (144 aa).

2 disordered regions span residues 1–42 (MKGG…PPSA) and 85–144 (PFIS…EDDD). Basic and acidic residues-rich tracts occupy residues 8–35 (AKSD…DPNK) and 89–99 (KAEKRKQEYEK). Positions 36 to 105 (PKRPPSAFFV…EYEKNLQAYN (70 aa)) form a DNA-binding region, HMG box. Residues 126-144 (NDDDEDQDGSGEDDSEDDD) are compositionally biased toward acidic residues.

This sequence belongs to the HMGB family. In terms of tissue distribution, expressed at higher levels in dark-grown tissues, such as roots; and at lower levels in light-grown tissues, such as cotyledons and stems.

The protein localises to the nucleus. The chain is HMG1/2-like protein from Ipomoea nil (Japanese morning glory).